Here is a 744-residue protein sequence, read N- to C-terminus: Eukaryotic translation initiation factor 3 subunit B (744 aa).

Residues 1–21 (MAPSFDHLPDPEEDEYDEEEL) form a disordered region. Positions 11-21 (PEEDEYDEEEL) are enriched in acidic residues. In terms of domain architecture, RRM spans 40 to 126 (TFVVIDGLPE…HTLRVNKLTD (87 aa)). 4 WD repeats span residues 193–232 (DRQH…RQKR), 234–290 (AHPF…PLRS), 307–348 (PIKR…LLDK), and 577–622 (ADHY…LREE).

Belongs to the eIF-3 subunit B family. Component of the eukaryotic translation initiation factor 3 (eIF-3) complex.

The protein localises to the cytoplasm. Its function is as follows. RNA-binding component of the eukaryotic translation initiation factor 3 (eIF-3) complex, which is involved in protein synthesis of a specialized repertoire of mRNAs and, together with other initiation factors, stimulates binding of mRNA and methionyl-tRNAi to the 40S ribosome. The eIF-3 complex specifically targets and initiates translation of a subset of mRNAs involved in cell proliferation. The protein is Eukaryotic translation initiation factor 3 subunit B (prt1) of Botryotinia fuckeliana (strain B05.10) (Noble rot fungus).